We begin with the raw amino-acid sequence, 206 residues long: Large ribosomal subunit protein uL4 (206 aa).

Residues 48–97 (THAVKNRSLVSGGGKKPWKQKHTGRARQGSTRASQWVGGGKAMGPKPRDY) form a disordered region. The span at 63–72 (KPWKQKHTGR) shows a compositional bias: basic residues.

The protein belongs to the universal ribosomal protein uL4 family. Part of the 50S ribosomal subunit.

In terms of biological role, one of the primary rRNA binding proteins, this protein initially binds near the 5'-end of the 23S rRNA. It is important during the early stages of 50S assembly. It makes multiple contacts with different domains of the 23S rRNA in the assembled 50S subunit and ribosome. Forms part of the polypeptide exit tunnel. This is Large ribosomal subunit protein uL4 from Anaeromyxobacter dehalogenans (strain 2CP-1 / ATCC BAA-258).